The following is a 592-amino-acid chain: Arginine--tRNA ligase (592 aa).

A 'HIGH' region motif is present at residues 139-149 (ANPNGPLHIGH).

Belongs to the class-I aminoacyl-tRNA synthetase family.

It localises to the cytoplasm. The enzyme catalyses tRNA(Arg) + L-arginine + ATP = L-arginyl-tRNA(Arg) + AMP + diphosphate. The chain is Arginine--tRNA ligase from Methanopyrus kandleri (strain AV19 / DSM 6324 / JCM 9639 / NBRC 100938).